Here is a 430-residue protein sequence, read N- to C-terminus: Bifunctional protein GlmU (430 aa).

Residues 1–223 (MSISVVILAA…EEEFKGVNSK (223 aa)) form a pyrophosphorylase region. UDP-N-acetyl-alpha-D-glucosamine is bound by residues 8–11 (LAAG), Lys22, and 81–82 (GT). Asp102 is a binding site for Mg(2+). Residues Gly135, Glu149, Asn164, and Asn221 each coordinate UDP-N-acetyl-alpha-D-glucosamine. Asn221 contacts Mg(2+). Residues 224 to 244 (LDLARAEEIMQRRIKEALMMA) form a linker region. The tract at residues 245–430 (GVTMCLPETI…NFFYKFFGDK (186 aa)) is N-acetyltransferase. The UDP-N-acetyl-alpha-D-glucosamine site is built by Arg308 and Lys325. The active-site Proton acceptor is His336. UDP-N-acetyl-alpha-D-glucosamine contacts are provided by Tyr339 and Asn350. Acetyl-CoA is bound by residues Ala353, 359–360 (NY), Ser378, Ala396, and Arg413.

The protein in the N-terminal section; belongs to the N-acetylglucosamine-1-phosphate uridyltransferase family. In the C-terminal section; belongs to the transferase hexapeptide repeat family. As to quaternary structure, homotrimer. Mg(2+) is required as a cofactor.

It localises to the cytoplasm. The enzyme catalyses alpha-D-glucosamine 1-phosphate + acetyl-CoA = N-acetyl-alpha-D-glucosamine 1-phosphate + CoA + H(+). It carries out the reaction N-acetyl-alpha-D-glucosamine 1-phosphate + UTP + H(+) = UDP-N-acetyl-alpha-D-glucosamine + diphosphate. Its pathway is nucleotide-sugar biosynthesis; UDP-N-acetyl-alpha-D-glucosamine biosynthesis; N-acetyl-alpha-D-glucosamine 1-phosphate from alpha-D-glucosamine 6-phosphate (route II): step 2/2. It functions in the pathway nucleotide-sugar biosynthesis; UDP-N-acetyl-alpha-D-glucosamine biosynthesis; UDP-N-acetyl-alpha-D-glucosamine from N-acetyl-alpha-D-glucosamine 1-phosphate: step 1/1. The protein operates within bacterial outer membrane biogenesis; LPS lipid A biosynthesis. Functionally, catalyzes the last two sequential reactions in the de novo biosynthetic pathway for UDP-N-acetylglucosamine (UDP-GlcNAc). The C-terminal domain catalyzes the transfer of acetyl group from acetyl coenzyme A to glucosamine-1-phosphate (GlcN-1-P) to produce N-acetylglucosamine-1-phosphate (GlcNAc-1-P), which is converted into UDP-GlcNAc by the transfer of uridine 5-monophosphate (from uridine 5-triphosphate), a reaction catalyzed by the N-terminal domain. The protein is Bifunctional protein GlmU of Sulfurovum sp. (strain NBC37-1).